We begin with the raw amino-acid sequence, 195 residues long: Imidazoleglycerol-phosphate dehydratase (195 aa).

This sequence belongs to the imidazoleglycerol-phosphate dehydratase family.

Its subcellular location is the cytoplasm. The enzyme catalyses D-erythro-1-(imidazol-4-yl)glycerol 3-phosphate = 3-(imidazol-4-yl)-2-oxopropyl phosphate + H2O. Its pathway is amino-acid biosynthesis; L-histidine biosynthesis; L-histidine from 5-phospho-alpha-D-ribose 1-diphosphate: step 6/9. In Jannaschia sp. (strain CCS1), this protein is Imidazoleglycerol-phosphate dehydratase.